A 314-amino-acid polypeptide reads, in one-letter code: 4-hydroxy-3-methylbut-2-enyl diphosphate reductase (314 aa).

C12 serves as a coordination point for [4Fe-4S] cluster. H43 and H81 together coordinate (2E)-4-hydroxy-3-methylbut-2-enyl diphosphate. Residues H43 and H81 each coordinate dimethylallyl diphosphate. Residues H43 and H81 each contribute to the isopentenyl diphosphate site. C103 serves as a coordination point for [4Fe-4S] cluster. H131 serves as a coordination point for (2E)-4-hydroxy-3-methylbut-2-enyl diphosphate. Position 131 (H131) interacts with dimethylallyl diphosphate. H131 contributes to the isopentenyl diphosphate binding site. E133 acts as the Proton donor in catalysis. T170 serves as a coordination point for (2E)-4-hydroxy-3-methylbut-2-enyl diphosphate. Residue C198 coordinates [4Fe-4S] cluster. The (2E)-4-hydroxy-3-methylbut-2-enyl diphosphate site is built by S226, N228, and S271. Positions 226, 228, and 271 each coordinate dimethylallyl diphosphate. The isopentenyl diphosphate site is built by S226, N228, and S271.

It belongs to the IspH family. [4Fe-4S] cluster serves as cofactor.

The enzyme catalyses isopentenyl diphosphate + 2 oxidized [2Fe-2S]-[ferredoxin] + H2O = (2E)-4-hydroxy-3-methylbut-2-enyl diphosphate + 2 reduced [2Fe-2S]-[ferredoxin] + 2 H(+). The catalysed reaction is dimethylallyl diphosphate + 2 oxidized [2Fe-2S]-[ferredoxin] + H2O = (2E)-4-hydroxy-3-methylbut-2-enyl diphosphate + 2 reduced [2Fe-2S]-[ferredoxin] + 2 H(+). The protein operates within isoprenoid biosynthesis; dimethylallyl diphosphate biosynthesis; dimethylallyl diphosphate from (2E)-4-hydroxy-3-methylbutenyl diphosphate: step 1/1. It participates in isoprenoid biosynthesis; isopentenyl diphosphate biosynthesis via DXP pathway; isopentenyl diphosphate from 1-deoxy-D-xylulose 5-phosphate: step 6/6. Functionally, catalyzes the conversion of 1-hydroxy-2-methyl-2-(E)-butenyl 4-diphosphate (HMBPP) into a mixture of isopentenyl diphosphate (IPP) and dimethylallyl diphosphate (DMAPP). Acts in the terminal step of the DOXP/MEP pathway for isoprenoid precursor biosynthesis. The polypeptide is 4-hydroxy-3-methylbut-2-enyl diphosphate reductase (Bacillus subtilis (strain 168)).